The chain runs to 194 residues: Peptidyl-tRNA hydrolase (194 aa).

Position 16 (Y16) interacts with tRNA. The active-site Proton acceptor is the H21. 3 residues coordinate tRNA: F67, N69, and N115.

This sequence belongs to the PTH family. As to quaternary structure, monomer.

The protein resides in the cytoplasm. It catalyses the reaction an N-acyl-L-alpha-aminoacyl-tRNA + H2O = an N-acyl-L-amino acid + a tRNA + H(+). Functionally, hydrolyzes ribosome-free peptidyl-tRNAs (with 1 or more amino acids incorporated), which drop off the ribosome during protein synthesis, or as a result of ribosome stalling. Its function is as follows. Catalyzes the release of premature peptidyl moieties from peptidyl-tRNA molecules trapped in stalled 50S ribosomal subunits, and thus maintains levels of free tRNAs and 50S ribosomes. This is Peptidyl-tRNA hydrolase from Salmonella heidelberg (strain SL476).